A 143-amino-acid polypeptide reads, in one-letter code: Large ribosomal subunit protein uL13 (143 aa).

This sequence belongs to the universal ribosomal protein uL13 family. As to quaternary structure, part of the 50S ribosomal subunit.

Its function is as follows. This protein is one of the early assembly proteins of the 50S ribosomal subunit, although it is not seen to bind rRNA by itself. It is important during the early stages of 50S assembly. This Natranaerobius thermophilus (strain ATCC BAA-1301 / DSM 18059 / JW/NM-WN-LF) protein is Large ribosomal subunit protein uL13.